A 257-amino-acid chain; its full sequence is Imidazole glycerol phosphate synthase subunit HisF (257 aa).

Catalysis depends on residues Asp-11 and Asp-130.

It belongs to the HisA/HisF family. As to quaternary structure, heterodimer of HisH and HisF.

The protein resides in the cytoplasm. The catalysed reaction is 5-[(5-phospho-1-deoxy-D-ribulos-1-ylimino)methylamino]-1-(5-phospho-beta-D-ribosyl)imidazole-4-carboxamide + L-glutamine = D-erythro-1-(imidazol-4-yl)glycerol 3-phosphate + 5-amino-1-(5-phospho-beta-D-ribosyl)imidazole-4-carboxamide + L-glutamate + H(+). Its pathway is amino-acid biosynthesis; L-histidine biosynthesis; L-histidine from 5-phospho-alpha-D-ribose 1-diphosphate: step 5/9. Functionally, IGPS catalyzes the conversion of PRFAR and glutamine to IGP, AICAR and glutamate. The HisF subunit catalyzes the cyclization activity that produces IGP and AICAR from PRFAR using the ammonia provided by the HisH subunit. This chain is Imidazole glycerol phosphate synthase subunit HisF, found in Shewanella halifaxensis (strain HAW-EB4).